A 401-amino-acid chain; its full sequence is MAVKKSVGSLKEADLKGKRVFVRVDLNVPLDENFNITDDTRIRAAVPTIKYLMQHGSHVILASHLGRPKGVTPKYSLKPLVPRLSELLGVEVKIANDSIGPEVEKLVAEIPEGGVLLLENVRFYKEEEKNEPEFAKKLASLADLYVNDAFGTAHRAHASTEGVAKYLKPAVAGFLMQKELDYLVGAVANPQKPFAAIVGGSKVSSKIGVIESLLEKVDVLLLGGGMIFTFYKAQGYAVGSSLVEEDKLDLATSLMEKAKAKGVSLLLPTDVVIADKFAADANSKVVPASEIPDGWMGLDIGPDAIKSFGSALDTTKTVIWNGPMGVFEFDKFAAGTEAIAKKLAELSGKGVTTIIGGGDSVAAVEKVGLAEKMSHISTGGGASLELLEGKPLPGVLALDDA.

Val24, Asp25, Asn27, Arg41, Ser63, His64, Gly66, Arg67, Arg122, His154, and Arg155 together coordinate (2R)-3-phosphoglycerate. ADP is bound at residue Gly200. CDP is bound at residue Gly200. The AMP site is built by Lys202 and Lys206. Residue Lys206 coordinates ATP. Gly224 lines the ADP pocket. Gly224 is a binding site for CDP. Residues Gly225 and Gly297 each coordinate AMP. The ATP site is built by Gly225 and Gly297. 2 residues coordinate CDP: Gly322 and Phe327. Phe327 contacts ADP. AMP is bound at residue Glu328. Residues Glu328, Asp359, and Ser360 each coordinate ATP. Residue Asp359 coordinates Mg(2+).

The protein belongs to the phosphoglycerate kinase family. Monomer. The cofactor is Mg(2+).

The protein resides in the cytoplasm. The catalysed reaction is (2R)-3-phosphoglycerate + ATP = (2R)-3-phospho-glyceroyl phosphate + ADP. It participates in carbohydrate degradation; glycolysis; pyruvate from D-glyceraldehyde 3-phosphate: step 2/5. This chain is Phosphoglycerate kinase, cytosolic, found in Nicotiana tabacum (Common tobacco).